Here is a 268-residue protein sequence, read N- to C-terminus: Microtubule-associated protein RP/EB family member 1 (268 aa).

N-acetylalanine is present on Ala2. The Calponin-homology (CH) domain occupies Asn14–Asp116. An N6-crotonyllysine modification is found at Lys66. A Phosphotyrosine modification is found at Tyr124. Positions Tyr124–Tyr268 are interaction with MTUS2/TIP150. Positions Asn147 to Pro160 are enriched in low complexity. Residues Asn147 to Pro184 form a disordered region. Ser155 carries the phosphoserine modification. Over residues Pro163–Thr172 the composition is skewed to polar residues. Residues Gly185 to Ile255 enclose the EB1 C-terminal domain. The segment at Gly185–Tyr268 is interaction with CDK5RAP2. The interaction with APC stretch occupies residues Thr206–Glu211. Positions Glu208–Tyr268 are DCTN1-binding. Lys220 is subject to N6-acetyllysine. The segment at Lys220 to Ile242 is APC-binding. Positions Glu232–Ile255 are interaction with SKA1.

Belongs to the MAPRE family. Homodimer. Heterodimer with MAPRE3. Interacts with DCTN1, DCTN2, TERF1 and dynein intermediate chain. Interaction with DIAPH1 and DIAPH2. Interacts (via C-terminal residues 206-211) with APC (via C-terminal residues 2674-2845); the interaction inhibits association with and bundling of F-actin. Interacts with CLASP2, DST, KIF2C and STIM1; probably required for their targeting to the growing microtubule plus ends. Interacts with MTUS2; interaction is direct and probably targets MTUS2 to microtubules. Interacts (via C-terminus) with SKA1 (via SXIP motif); the interaction is direct and stabilizes the kinetochore-microtubule attachment of the SKA1 complex. Interacts with APC2. Interacts with CLASP1. Interacts with CDK5RAP2. Interacts with MACF1. Interacts with RABL2/RABL2A; binds preferentially to GTP-bound RABL2. Interacts with KCNAB2. Interacts (via C-terminus) with CLIP1. Interacts with SLAIN2 and SLAIN1. Interacts with KIF18B; this interaction is required for efficient accumulation of KIF18B at microtubule plus ends. Interacts with MISP. Interacts with KNSTRN. Interacts with NCKAP5L. Interacts with CAMSAP2. Interacts with PDE4DIP isoform 13/MMG8/SMYLE; this interaction is required for its recruitment to the Golgi apparatus. Forms a pericentrosomal complex with AKAP9, CDK5RAP2 and PDE4DIP isoform 13/MMG8/SMYLE; within this complex, MAPRE1 binding to CDK5RAP2 may be mediated by PDE4DIP. Interacts with AKNA. Interacts with GAS2L1, GAS2L2, and GAS2L3. In terms of processing, acetylation at Lys-220 by KAT2B/PCAF promotes dynamic kinetochore-microtubule interactions in early mitosis. Post-translationally, crotonylated by KAT5 during mitosis, promoting astral microtubule plasticity and dynamic connection between astral microtubules and the cortex during mitotic chromosome segregation, thereby ensuring accurate spindle positioning in mitosis. Decrotonylated by HDAC3.

It localises to the cytoplasm. The protein resides in the cytoskeleton. The protein localises to the microtubule organizing center. Its subcellular location is the centrosome. It is found in the golgi apparatus. It localises to the spindle. The protein resides in the spindle pole. Its function is as follows. Plus-end tracking protein (+TIP) that binds to the plus-end of microtubules and regulates the dynamics of the microtubule cytoskeleton. Recruits other +TIP proteins to microtubules by binding to a conserved Ser-X-Leu-Pro (SXLP) motif in their polypeptide chains. Promotes cytoplasmic microtubule nucleation and elongation. Involved in mitotic spindle positioning by stabilizing microtubules and promoting dynamic connection between astral microtubules and the cortex during mitotic chromosome segregation. Assists chromosome alignment in metaphase by recruiting the SKA complex to the spindle and stabilizing its interactions with microtubule bundles (K-fibers). Also acts as a regulator of minus-end microtubule organization: interacts with the complex formed by AKAP9 and PDE4DIP, leading to recruit CAMSAP2 to the Golgi apparatus, thereby tethering non-centrosomal minus-end microtubules to the Golgi, an important step for polarized cell movement. Promotes elongation of CAMSAP2-decorated microtubule stretches on the minus-end of microtubules. Acts as a regulator of autophagosome transport via interaction with CAMSAP2. Functions downstream of Rho GTPases and DIAPH1 in stable microtubule formation. May play a role in cell migration. The sequence is that of Microtubule-associated protein RP/EB family member 1 (MAPRE1) from Bos taurus (Bovine).